Consider the following 555-residue polypeptide: Cytochrome P450 monooxygenase abl2 (555 aa).

2 helical membrane-spanning segments follow: residues 38-58 and 141-161; these read SFDLFSKLAGLALLSFAALFI and VFIGAVAKVGGAVGISMAPLA. Asn-325 and Asn-360 each carry an N-linked (GlcNAc...) asparagine glycan. Cys-489 serves as a coordination point for heme.

The protein belongs to the cytochrome P450 family. It depends on heme as a cofactor.

It localises to the membrane. The protein operates within hormone biosynthesis. Cytochrome P450 monooxygenase; part of the gene cluster that mediates the biosynthesis of abscisic acid (ABA), a phytohormone that acts antagonistically toward salicylic acid (SA), jasmonic acid (JA) and ethylene (ETH) signaling, to impede plant defense responses. The first step of the pathway catalyzes the reaction from farnesyl diphosphate to alpha-ionylideneethane performed by the alpha-ionylideneethane synthase abl3 via a three-step reaction mechanism involving 2 neutral intermediates, beta-farnesene and allofarnesene. The cytochrome P450 monooxygenase abl1 might then be involved in the conversion of alpha-ionylideneethane to alpha-ionylideneacetic acid. Alpha-ionylideneacetic acid is further converted to abscisic acid in 2 steps involving the cytochrome P450 monooxygenase abl2 and the short-chain dehydrogenase/reductase abl4, via the intermediates 1'-deoxy-ABA or 1',4'-trans-diol-ABA, depending on the order of action of these 2 enzymes. Abl2 is responsible for the hydroxylation of carbon atom C-1' and abl4 might be involved in the oxidation of the C-4' carbon atom. In Leptosphaeria maculans (strain JN3 / isolate v23.1.3 / race Av1-4-5-6-7-8) (Blackleg fungus), this protein is Cytochrome P450 monooxygenase abl2.